Here is a 457-residue protein sequence, read N- to C-terminus: MKKQSNIWLYFFGALGGALYGYDTGVISGAILFMKKELGLNAFTEGLVVSSLLVGAILGSGAAGKLTDRFGRKKAIMAAALLFCIGGLGVALAPNTGVMVLFRIILGLAVGTSTTIVPLYLSELAPKHKRGALSSLNQLMITVGILLSYIVNYIFADAEAWRWMLGLAAVPSLLLLIGILFMPESPRWLFTNGEESKAKKILEKLRGTKDIDQEIHDIKEAEKQDEGGLKELFDPWVRPALIAGLGLAFLQQFIGTNTIIYYAPKTFTNVGFGNSASILGTVGIGTVNVLMTLVAIKIIDKIGRKPLLLFGNAGMVISLIVLALVNLFFDNTPAASWTTVICLGVFIVVFAVSWGPVVWVMLPELFPLHVRGIGTGVSTLMLHVGTLIVSLTYPILMEAIGISYLFLIYAAIGIMAFLFVRFKVTETKGRSLEEIEQDLRDKNGQGGAAGKQQTVGT.

The next 12 helical transmembrane spans lie at 7–27, 38–58, 75–95, 97–117, 136–156, 163–183, 240–260, 276–296, 309–329, 340–360, 377–397, and 400–420; these read IWLY…TGVI, LGLN…GAIL, AIMA…LAPN, GVMV…TTIV, LNQL…YIFA, WMLG…LFMP, ALIA…NTII, ASIL…LVAI, LFGN…NLFF, VICL…VVWV, VSTL…PILM, and IGIS…FLFV. The interval 438–457 is disordered; that stretch reads DLRDKNGQGGAAGKQQTVGT.

Belongs to the major facilitator superfamily. Sugar transporter (TC 2.A.1.1) family.

It is found in the cell membrane. This chain is Putative metabolite transport protein YwtG (ywtG), found in Bacillus subtilis (strain 168).